The sequence spans 319 residues: Ribosomal RNA small subunit methyltransferase H (319 aa).

Residues G37–H39, D56, L90, D104, and Q111 each bind S-adenosyl-L-methionine.

It belongs to the methyltransferase superfamily. RsmH family.

The protein localises to the cytoplasm. The catalysed reaction is cytidine(1402) in 16S rRNA + S-adenosyl-L-methionine = N(4)-methylcytidine(1402) in 16S rRNA + S-adenosyl-L-homocysteine + H(+). Specifically methylates the N4 position of cytidine in position 1402 (C1402) of 16S rRNA. The polypeptide is Ribosomal RNA small subunit methyltransferase H (Nocardioides sp. (strain ATCC BAA-499 / JS614)).